A 378-amino-acid chain; its full sequence is Actin-related protein 2/3 complex subunit 1A (378 aa).

7 WD repeats span residues 8–47 (RFAE…HWER), 53–92 (KHDQ…WVPT), 97–138 (RLNR…WVSK), 143–182 (RHES…VDTK), 203–242 (LSYS…PLAQ), 257–295 (ISEK…KAAS), and 331–375 (VHDN…QELG).

The protein belongs to the WD repeat ARPC1 family. Component of the Arp2/3 complex composed of ARP2, ARP3, ARPC1/p41-ARC, ARPC2/p34-ARC, ARPC3/p21-ARC, ARPC4/p20-ARC and ARPC5/p16-ARC. Expressed at low levels in all tissues with a relatively highest expression in inflorescences.

Its subcellular location is the cytoplasm. It is found in the cytoskeleton. In terms of biological role, functions as a component of the Arp2/3 complex which is involved in regulation of actin polymerization and together with an activating nucleation-promoting factor (NPF) mediates the formation of branched actin networks. Arp2/3 complex plays a critical role in the control of cell morphogenesis via the modulation of cell polarity development. This is Actin-related protein 2/3 complex subunit 1A (ARPC1A) from Arabidopsis thaliana (Mouse-ear cress).